Consider the following 643-residue polypeptide: Aspartic protease 3 (643 aa).

Positions 1 to 31 (MEGRTTAGRATPAGFWLFSCCLASVLWSANA) are cleaved as a signal peptide. Low complexity predominate over residues 87–99 (APEVSGAAGASAS). A disordered region spans residues 87–116 (APEVSGAAGASASKTSEKPIRPYHTGPSSR). One can recognise a Peptidase A1 domain in the interval 281–600 (YVGVIGIGTP…GTRPSLVGIA (320 aa)). Catalysis depends on residues D299 and D490.

The protein belongs to the peptidase A1 family.

Its subcellular location is the endomembrane system. Its activity is regulated as follows. Inhibited by 49c, a hydroxyethylamine scaffold-based compound. Functionally, required for the processing-mediated maturation of a subset of microneme proteins, such as MIC6, and rhoptry proteins, such as ROP1. By regulating microneme and rhoptry processing, plays an essential role in the lysis of the host cell membrane during egress and in rhoptry content discharge, which is required for invasion of host cells. The polypeptide is Aspartic protease 3 (Toxoplasma gondii).